Consider the following 193-residue polypeptide: Anthranilate synthase component 2 (193 aa).

The 191-residue stretch at 3–193 (NILFLDNFDS…QQSIEWLLNR (191 aa)) folds into the Glutamine amidotransferase type-1 domain. 57 to 59 (GPG) is an L-glutamine binding site. Cys-84 serves as the catalytic Nucleophile; for GATase activity. L-glutamine is bound by residues Gln-88 and 134-135 (SL). Residues His-170 and Glu-172 each act as for GATase activity in the active site.

Heterotetramer consisting of two non-identical subunits: a beta subunit (TrpG) and a large alpha subunit (TrpE).

It catalyses the reaction chorismate + L-glutamine = anthranilate + pyruvate + L-glutamate + H(+). It participates in amino-acid biosynthesis; L-tryptophan biosynthesis; L-tryptophan from chorismate: step 1/5. Its function is as follows. Part of a heterotetrameric complex that catalyzes the two-step biosynthesis of anthranilate, an intermediate in the biosynthesis of L-tryptophan. In the first step, the glutamine-binding beta subunit (TrpG) of anthranilate synthase (AS) provides the glutamine amidotransferase activity which generates ammonia as a substrate that, along with chorismate, is used in the second step, catalyzed by the large alpha subunit of AS (TrpE) to produce anthranilate. In the absence of TrpG, TrpE can synthesize anthranilate directly from chorismate and high concentrations of ammonia. The chain is Anthranilate synthase component 2 (trpG) from Haemophilus influenzae (strain ATCC 51907 / DSM 11121 / KW20 / Rd).